A 290-amino-acid polypeptide reads, in one-letter code: 4-hydroxy-tetrahydrodipicolinate synthase (290 aa).

Threonine 44 is a pyruvate binding site. The active-site Proton donor/acceptor is the tyrosine 132. Lysine 160 (schiff-base intermediate with substrate) is an active-site residue. Residue isoleucine 202 participates in pyruvate binding.

It belongs to the DapA family. Homotetramer; dimer of dimers.

The protein resides in the cytoplasm. It carries out the reaction L-aspartate 4-semialdehyde + pyruvate = (2S,4S)-4-hydroxy-2,3,4,5-tetrahydrodipicolinate + H2O + H(+). The protein operates within amino-acid biosynthesis; L-lysine biosynthesis via DAP pathway; (S)-tetrahydrodipicolinate from L-aspartate: step 3/4. Functionally, catalyzes the condensation of (S)-aspartate-beta-semialdehyde [(S)-ASA] and pyruvate to 4-hydroxy-tetrahydrodipicolinate (HTPA). In Geobacter sp. (strain M21), this protein is 4-hydroxy-tetrahydrodipicolinate synthase.